Reading from the N-terminus, the 878-residue chain is Alanine--tRNA ligase (878 aa).

Zn(2+)-binding residues include His-562, His-566, Cys-670, and His-674.

Belongs to the class-II aminoacyl-tRNA synthetase family. The cofactor is Zn(2+).

It localises to the cytoplasm. It carries out the reaction tRNA(Ala) + L-alanine + ATP = L-alanyl-tRNA(Ala) + AMP + diphosphate. Its function is as follows. Catalyzes the attachment of alanine to tRNA(Ala) in a two-step reaction: alanine is first activated by ATP to form Ala-AMP and then transferred to the acceptor end of tRNA(Ala). Also edits incorrectly charged Ser-tRNA(Ala) and Gly-tRNA(Ala) via its editing domain. The polypeptide is Alanine--tRNA ligase (Acinetobacter baylyi (strain ATCC 33305 / BD413 / ADP1)).